The primary structure comprises 150 residues: MSKLSQPASTAGVNGISVIHTQAHASGLQQVPQLVPAGPGGGGKAVPPSKQSKKSSPMDRNSDEYRQRRERNNMAVKKSRLKSKQKAQDTLQRVNQLKEENERLEAKIKLLTKELSVLKDLFLEHAHNLADNVQPISTETTVANSDNTGQ.

Lys3 participates in a covalent cross-link: Glycyl lysine isopeptide (Lys-Gly) (interchain with G-Cter in SUMO2). Residues 27–94 (GLQQVPQLVP…QKAQDTLQRV (68 aa)) are disordered. A compositionally biased stretch (low complexity) spans 28–37 (LQQVPQLVPA). Over residues 56–72 (SPMDRNSDEYRQRRERN) the composition is skewed to basic and acidic residues. The bZIP domain occupies 62–125 (SDEYRQRRER…SVLKDLFLEH (64 aa)). The segment at 66–93 (RQRRERNNMAVKKSRLKSKQKAQDTLQR) is basic motif. The leucine-zipper stretch occupies residues 97–118 (LKEENERLEAKIKLLTKELSVL).

The protein belongs to the bZIP family. C/EBP subfamily. As to quaternary structure, binds DNA as a dimer and can form stable heterodimers with CEBPA and CEBPB. Interacts with ZNF638; this interaction increases transcriptional activation.

It localises to the nucleus. Transcription factor that binds to the promoter and the enhancer regions of target genes. Binds to the promoter and the enhancer of the alpha-1-fetoprotein gene. Binds to the enhancer element PRE-I (positive regulatory element-I) of the IL-4 gene. Binds to the promoter and the enhancer of the immunoglobulin heavy chain. Binds to GPE1, a cis-acting element in the G-CSF gene promoter. This is CCAAT/enhancer-binding protein gamma (Cebpg) from Rattus norvegicus (Rat).